The sequence spans 148 residues: SsrA-binding protein (148 aa).

A disordered region spans residues 129 to 148 (ETEKDRDWQREKARLMREKA).

Belongs to the SmpB family.

The protein localises to the cytoplasm. In terms of biological role, required for rescue of stalled ribosomes mediated by trans-translation. Binds to transfer-messenger RNA (tmRNA), required for stable association of tmRNA with ribosomes. tmRNA and SmpB together mimic tRNA shape, replacing the anticodon stem-loop with SmpB. tmRNA is encoded by the ssrA gene; the 2 termini fold to resemble tRNA(Ala) and it encodes a 'tag peptide', a short internal open reading frame. During trans-translation Ala-aminoacylated tmRNA acts like a tRNA, entering the A-site of stalled ribosomes, displacing the stalled mRNA. The ribosome then switches to translate the ORF on the tmRNA; the nascent peptide is terminated with the 'tag peptide' encoded by the tmRNA and targeted for degradation. The ribosome is freed to recommence translation, which seems to be the essential function of trans-translation. This Ralstonia nicotianae (strain ATCC BAA-1114 / GMI1000) (Ralstonia solanacearum) protein is SsrA-binding protein.